A 186-amino-acid polypeptide reads, in one-letter code: GPI-anchored hemophore ARB_02741 (186 aa).

The first 18 residues, 1-18 (MKFSQAVIALAAATVVSA), serve as a signal peptide directing secretion. Positions 19-108 (QLPDVPQCSL…SSKPSEPSTS (90 aa)) constitute a CFEM domain. Cystine bridges form between C26–C67, C30–C62, C40–C48, and C50–C83. D45 is a binding site for heme. The disordered stretch occupies residues 89–159 (PVSIPPVEES…NTGVPTQSTP (71 aa)). A compositionally biased stretch (low complexity) spans 96–131 (EESSSKPSEPSTSEAPTASPTESTPAPTTPAPTGTG). Residues 132–144 (SPSGTGAPGGPSG) are compositionally biased toward gly residues. Polar residues predominate over residues 148–159 (FTNTGVPTQSTP). Residue G163 is the site of GPI-anchor amidated glycine attachment. Positions 164–186 (AASGLSANIGGMGAAILAIAAYL) are cleaved as a propeptide — removed in mature form.

The protein belongs to the RBT5 family. Post-translationally, the GPI-anchor is attached to the protein in the endoplasmic reticulum and serves to target the protein to the cell surface. There, the glucosamine-inositol phospholipid moiety is cleaved off and the GPI-modified mannoprotein is covalently attached via its lipidless GPI glycan remnant to the 1,6-beta-glucan of the outer cell wall layer.

It localises to the secreted. The protein resides in the cell wall. Its subcellular location is the cell membrane. Functionally, GPI-anchored cell wall protein involved in stabilizing the cell wall. The polypeptide is GPI-anchored hemophore ARB_02741 (Arthroderma benhamiae (strain ATCC MYA-4681 / CBS 112371) (Trichophyton mentagrophytes)).